Consider the following 312-residue polypeptide: Ornithine carbamoyltransferase (312 aa).

Carbamoyl phosphate contacts are provided by residues 59–62 (STRT), Q86, R110, and 137–140 (HPCQ). L-ornithine-binding positions include N167, D231, and 235–236 (SM). Carbamoyl phosphate-binding residues include C271 and R299.

Belongs to the aspartate/ornithine carbamoyltransferase superfamily. OTCase family.

It is found in the cytoplasm. The catalysed reaction is carbamoyl phosphate + L-ornithine = L-citrulline + phosphate + H(+). The protein operates within amino-acid biosynthesis; L-arginine biosynthesis; L-arginine from L-ornithine and carbamoyl phosphate: step 1/3. Reversibly catalyzes the transfer of the carbamoyl group from carbamoyl phosphate (CP) to the N(epsilon) atom of ornithine (ORN) to produce L-citrulline. The sequence is that of Ornithine carbamoyltransferase from Methanopyrus kandleri (strain AV19 / DSM 6324 / JCM 9639 / NBRC 100938).